We begin with the raw amino-acid sequence, 671 residues long: DNA ligase (671 aa).

NAD(+) contacts are provided by residues D34–D38, S83–L84, and E117. The active-site N6-AMP-lysine intermediate is K119. The NAD(+) site is built by R140, E177, K293, and K317. C411, C414, C429, and C434 together coordinate Zn(2+). A BRCT domain is found at K591–Q671.

The protein belongs to the NAD-dependent DNA ligase family. LigA subfamily. Requires Mg(2+) as cofactor. Mn(2+) is required as a cofactor.

It carries out the reaction NAD(+) + (deoxyribonucleotide)n-3'-hydroxyl + 5'-phospho-(deoxyribonucleotide)m = (deoxyribonucleotide)n+m + AMP + beta-nicotinamide D-nucleotide.. DNA ligase that catalyzes the formation of phosphodiester linkages between 5'-phosphoryl and 3'-hydroxyl groups in double-stranded DNA using NAD as a coenzyme and as the energy source for the reaction. It is essential for DNA replication and repair of damaged DNA. This is DNA ligase from Geobacter metallireducens (strain ATCC 53774 / DSM 7210 / GS-15).